The primary structure comprises 633 residues: Extracellular metalloproteinase 3 (633 aa).

The signal sequence occupies residues 1–18 (MHGLLLAGLLALPMNVLA). A propeptide spanning residues 19–246 (HPAEQQTSSV…VHNVVDYVAS (228 aa)) is cleaved from the precursor. Asn-410 is a glycosylation site (N-linked (GlcNAc...) asparagine). His-429 lines the Zn(2+) pocket. Glu-430 is a catalytic residue. His-433 provides a ligand contact to Zn(2+). N-linked (GlcNAc...) asparagine glycosylation is present at Asn-480.

This sequence belongs to the peptidase M36 family. It depends on Zn(2+) as a cofactor.

It is found in the secreted. In terms of biological role, secreted metalloproteinase probably acting as a virulence factor. This Arthroderma otae (Microsporum canis) protein is Extracellular metalloproteinase 3 (MEP3).